Reading from the N-terminus, the 397-residue chain is Cysteine desulfurase IscS (397 aa).

Residues 72-73, Asn152, Gln180, and 200-202 contribute to the pyridoxal 5'-phosphate site; these read GS and SAH. An N6-(pyridoxal phosphate)lysine modification is found at Lys203. Thr238 contacts pyridoxal 5'-phosphate. Cys328 functions as the Cysteine persulfide intermediate in the catalytic mechanism. Cys328 serves as a coordination point for [2Fe-2S] cluster.

This sequence belongs to the class-V pyridoxal-phosphate-dependent aminotransferase family. NifS/IscS subfamily. Homodimer. Forms a heterotetramer with IscU, interacts with other sulfur acceptors. The cofactor is pyridoxal 5'-phosphate.

The protein localises to the cytoplasm. It carries out the reaction (sulfur carrier)-H + L-cysteine = (sulfur carrier)-SH + L-alanine. It participates in cofactor biosynthesis; iron-sulfur cluster biosynthesis. Master enzyme that delivers sulfur to a number of partners involved in Fe-S cluster assembly, tRNA modification or cofactor biosynthesis. Catalyzes the removal of elemental sulfur atoms from cysteine to produce alanine. Functions as a sulfur delivery protein for Fe-S cluster synthesis onto IscU, an Fe-S scaffold assembly protein, as well as other S acceptor proteins. In Clostridium botulinum (strain ATCC 19397 / Type A), this protein is Cysteine desulfurase IscS.